The following is a 208-amino-acid chain: Putative adhesin P1-like protein MPN_468 (208 aa).

Disordered regions lie at residues threonine 29–threonine 49 and aspartate 97–proline 172. A compositionally biased stretch (low complexity) spans threonine 100–glycine 132. Over residues serine 145 to aspartate 158 the composition is skewed to polar residues. A compositionally biased stretch (low complexity) spans asparagine 159–proline 172.

This sequence belongs to the adhesin P1 family.

This Mycoplasma pneumoniae (strain ATCC 29342 / M129 / Subtype 1) (Mycoplasmoides pneumoniae) protein is Putative adhesin P1-like protein MPN_468.